The primary structure comprises 160 residues: Small ribosomal subunit protein uS19 (160 aa).

The interval 1 to 27 (MARQKFSGKGGKGKSKKGQQSTAPRRR) is disordered.

This sequence belongs to the universal ribosomal protein uS19 family.

Its function is as follows. Protein S19 forms a complex with S13 that binds strongly to the 16S ribosomal RNA. The polypeptide is Small ribosomal subunit protein uS19 (Methanococcus vannielii (strain ATCC 35089 / DSM 1224 / JCM 13029 / OCM 148 / SB)).